The sequence spans 453 residues: Bifunctional protein GlmU (453 aa).

Residues 1–225 (MNIVILAAGT…EWETLGVNSK (225 aa)) form a pyrophosphorylase region. Residues 6-9 (LAAG), Lys20, Gln71, 76-77 (GT), 98-100 (YGD), Gly135, Glu150, Asn165, and Asn223 each bind UDP-N-acetyl-alpha-D-glucosamine. Asp100 is a binding site for Mg(2+). Residue Asn223 participates in Mg(2+) binding. The tract at residues 226-246 (AQLAELERIHQRNVADALLVD) is linker. Positions 247–453 (GVTLADPARV…GYVRPVKKKS (207 aa)) are N-acetyltransferase. Positions 329 and 347 each coordinate UDP-N-acetyl-alpha-D-glucosamine. Catalysis depends on His359, which acts as the Proton acceptor. UDP-N-acetyl-alpha-D-glucosamine-binding residues include Tyr362 and Asn373. Residues Ala376, 382–383 (NY), Ser401, and Ala419 contribute to the acetyl-CoA site.

This sequence in the N-terminal section; belongs to the N-acetylglucosamine-1-phosphate uridyltransferase family. In the C-terminal section; belongs to the transferase hexapeptide repeat family. In terms of assembly, homotrimer. The cofactor is Mg(2+).

It is found in the cytoplasm. The catalysed reaction is alpha-D-glucosamine 1-phosphate + acetyl-CoA = N-acetyl-alpha-D-glucosamine 1-phosphate + CoA + H(+). The enzyme catalyses N-acetyl-alpha-D-glucosamine 1-phosphate + UTP + H(+) = UDP-N-acetyl-alpha-D-glucosamine + diphosphate. Its pathway is nucleotide-sugar biosynthesis; UDP-N-acetyl-alpha-D-glucosamine biosynthesis; N-acetyl-alpha-D-glucosamine 1-phosphate from alpha-D-glucosamine 6-phosphate (route II): step 2/2. The protein operates within nucleotide-sugar biosynthesis; UDP-N-acetyl-alpha-D-glucosamine biosynthesis; UDP-N-acetyl-alpha-D-glucosamine from N-acetyl-alpha-D-glucosamine 1-phosphate: step 1/1. It functions in the pathway bacterial outer membrane biogenesis; LPS lipid A biosynthesis. Its function is as follows. Catalyzes the last two sequential reactions in the de novo biosynthetic pathway for UDP-N-acetylglucosamine (UDP-GlcNAc). The C-terminal domain catalyzes the transfer of acetyl group from acetyl coenzyme A to glucosamine-1-phosphate (GlcN-1-P) to produce N-acetylglucosamine-1-phosphate (GlcNAc-1-P), which is converted into UDP-GlcNAc by the transfer of uridine 5-monophosphate (from uridine 5-triphosphate), a reaction catalyzed by the N-terminal domain. The polypeptide is Bifunctional protein GlmU (Burkholderia orbicola (strain AU 1054)).